A 360-amino-acid polypeptide reads, in one-letter code: Protein RecA (360 aa).

Residue 77-84 participates in ATP binding; that stretch reads GPESSGKT.

It belongs to the RecA family.

The protein resides in the cytoplasm. Can catalyze the hydrolysis of ATP in the presence of single-stranded DNA, the ATP-dependent uptake of single-stranded DNA by duplex DNA, and the ATP-dependent hybridization of homologous single-stranded DNAs. It interacts with LexA causing its activation and leading to its autocatalytic cleavage. The chain is Protein RecA from Chelativorans sp. (strain BNC1).